The following is a 367-amino-acid chain: Type II methyltransferase M.CviJI (367 aa).

One can recognise an SAM-dependent MTase C5-type domain in the interval 3-367 (FRTLELFAGI…EYLGYLVQYD (365 aa)). The active site involves cysteine 73.

Belongs to the class I-like SAM-binding methyltransferase superfamily. C5-methyltransferase family.

The enzyme catalyses a 2'-deoxycytidine in DNA + S-adenosyl-L-methionine = a 5-methyl-2'-deoxycytidine in DNA + S-adenosyl-L-homocysteine + H(+). In terms of biological role, a methylase that recognizes the double-stranded sequence 5'-RGCY-3', methylates C-3 on both strands, and protects the DNA from cleavage by the CviJI endonuclease. This chain is Type II methyltransferase M.CviJI, found in Chlorella (PBCV-IL3A).